We begin with the raw amino-acid sequence, 89 residues long: MEQESELLSLNTLARILTLYFSSEKGTKITPSALELITQYLRIYSKEAVCRAYEEKKNSIMSSSENEDIVLELEDLENGIAAQLALDFS.

It belongs to the CENP-X/MHF2 family. As to quaternary structure, the MHF histone-fold complex is a heterotetramer of 2 mhf1-mhf2 heterodimers. Component of the inner kinetochore constitutive centromere-associated network (CCAN) (also known as central kinetochore Sim4 complex in fission yeast), which is composed of at least cnl2, cnp3, cnp20, fta1, fta2, fta3, fta4, fta6, fta7, mal2, mhf1, mhf2, mis6, mis15, mis17, sim4 and wip1.

Its subcellular location is the nucleus. The protein resides in the cytoplasm. Its function is as follows. Component of a FANCM-MHF complex that promotes gene conversion at blocked replication forks, probably by reversal of the stalled fork. FANCM-MHF promotes non-crossover recombination. This is Inner kinetochore subunit mhf2 from Schizosaccharomyces pombe (strain 972 / ATCC 24843) (Fission yeast).